Consider the following 217-residue polypeptide: Putative 8-oxo-dGTP diphosphatase 3 (217 aa).

The Nudix hydrolase domain occupies 30 to 164; it reads GRYGAAGLLL…PGFAASWQRL (135 aa). The tract at residues 67-92 is disordered; the sequence is LPGGARDSHETPEQTAVRESSEEAGL. Mg(2+) is bound by residues glycine 70, glutamate 85, glutamate 88, and glutamate 89. A Nudix box motif is present at residues 70 to 91; that stretch reads GARDSHETPEQTAVRESSEEAG.

It belongs to the Nudix hydrolase family. It depends on Mg(2+) as a cofactor. Requires Mn(2+) as cofactor.

The catalysed reaction is 8-oxo-dGTP + H2O = 8-oxo-dGMP + diphosphate + H(+). May be involved in the GO system responsible for removing an oxidatively damaged form of guanine (7,8-dihydro-8-oxoguanine, 8-oxo-dGTP) from DNA and the nucleotide pool. 8-oxo-dGTP is inserted opposite dA and dC residues of template DNA with almost equal efficiency thus leading to A.T to G.C transversions. MutT specifically degrades 8-oxo-dGTP to the monophosphate. The sequence is that of Putative 8-oxo-dGTP diphosphatase 3 (mutT3) from Mycobacterium tuberculosis (strain CDC 1551 / Oshkosh).